Reading from the N-terminus, the 389-residue chain is Tryptophan synthase beta chain (389 aa).

K84 is subject to N6-(pyridoxal phosphate)lysine.

This sequence belongs to the TrpB family. In terms of assembly, tetramer of two alpha and two beta chains. Requires pyridoxal 5'-phosphate as cofactor.

The enzyme catalyses (1S,2R)-1-C-(indol-3-yl)glycerol 3-phosphate + L-serine = D-glyceraldehyde 3-phosphate + L-tryptophan + H2O. It functions in the pathway amino-acid biosynthesis; L-tryptophan biosynthesis; L-tryptophan from chorismate: step 5/5. Its function is as follows. The beta subunit is responsible for the synthesis of L-tryptophan from indole and L-serine. This is Tryptophan synthase beta chain from Methanococcus aeolicus (strain ATCC BAA-1280 / DSM 17508 / OCM 812 / Nankai-3).